The chain runs to 492 residues: Beta-Ala-His dipeptidase (492 aa).

His-107 lines the Zn(2+) pocket. The active site involves Asp-109. Asp-140 contributes to the Zn(2+) binding site. The active-site Proton acceptor is Glu-174. Glu-175 is a binding site for Zn(2+). Phosphoserine is present on Ser-194. The Zn(2+) site is built by Asp-203 and His-453.

The protein belongs to the peptidase M20A family. Homodimer. Zn(2+) is required as a cofactor. Detected exclusively in kidney.

The protein resides in the secreted. It catalyses the reaction Preferential hydrolysis of the beta-Ala-|-His dipeptide (carnosine), and also anserine, Xaa-|-His dipeptides and other dipeptides including homocarnosine.. The enzyme catalyses carnosine + H2O = beta-alanine + L-histidine. The catalysed reaction is anserine + H2O = N(pros)-methyl-L-histidine + beta-alanine. It carries out the reaction L-alanyl-L-histidine + H2O = L-histidine + L-alanine. It catalyses the reaction glycyl-L-histidine + H2O = L-histidine + glycine. The enzyme catalyses L-homocarnosine + H2O = 4-aminobutanoate + L-histidine. Functionally, catalyzes the peptide bond hydrolysis in Xaa-His dipeptides, displaying the highest activity toward carnosine (beta-alanyl-L-histidine) and anserine (beta-alanyl-3-methyl-histidine). This Rattus norvegicus (Rat) protein is Beta-Ala-His dipeptidase (Cndp1).